Reading from the N-terminus, the 593-residue chain is Copine-5 (593 aa).

One can recognise a C2 1 domain in the interval 2 to 134; it reads EQPEDMASLS…SPGSRLEKPL (133 aa). At S19 the chain carries Phosphoserine. Residues D38, D44, D98, D100, S103, K108, and D110 each coordinate Ca(2+). S103 is modified (phosphoserine). S140 is subject to Phosphoserine. The region spanning 161–284 is the C2 2 domain; that stretch reads KCGTIILSAE…ARGQSQFNIY (124 aa). Ca(2+)-binding residues include D192, D198, D254, D256, and D262. The 227-residue stretch at 328–554 folds into the VWFA domain; the sequence is NFTVAIDFTA…DVLAEIPDQL (227 aa). Residues 562–593 form a disordered region; it reads GIRPRPPPAAPTHSPSQSPARTPPASPLHTHI. Positions 572–581 are enriched in low complexity; that stretch reads PTHSPSQSPA.

It belongs to the copine family. The cofactor is Ca(2+). In terms of tissue distribution, expressed in the brain, heart, stomach, spleen, lymph node and testis. Expressed in melanocytes.

It is found in the perikaryon. Its subcellular location is the cell projection. Probable calcium-dependent phospholipid-binding protein that may play a role in calcium-mediated intracellular processes. Plays a role in dendrite formation by melanocytes. The polypeptide is Copine-5 (Homo sapiens (Human)).